Reading from the N-terminus, the 399-residue chain is Succinate--CoA ligase [ADP-forming] subunit beta (399 aa).

The ATP-grasp domain maps to 9–254 (KELLAKFGVA…ETEEDPAEIE (246 aa)). ATP contacts are provided by residues Lys-46, 53-55 (GRG), Ala-112, and Glu-117. Residues Asn-209 and Asp-223 each coordinate Mg(2+). Residues Asn-274 and 331 to 333 (GIM) each bind substrate.

The protein belongs to the succinate/malate CoA ligase beta subunit family. Heterotetramer of two alpha and two beta subunits. It depends on Mg(2+) as a cofactor.

It carries out the reaction succinate + ATP + CoA = succinyl-CoA + ADP + phosphate. The enzyme catalyses GTP + succinate + CoA = succinyl-CoA + GDP + phosphate. The protein operates within carbohydrate metabolism; tricarboxylic acid cycle; succinate from succinyl-CoA (ligase route): step 1/1. Succinyl-CoA synthetase functions in the citric acid cycle (TCA), coupling the hydrolysis of succinyl-CoA to the synthesis of either ATP or GTP and thus represents the only step of substrate-level phosphorylation in the TCA. The beta subunit provides nucleotide specificity of the enzyme and binds the substrate succinate, while the binding sites for coenzyme A and phosphate are found in the alpha subunit. This is Succinate--CoA ligase [ADP-forming] subunit beta from Rhizorhabdus wittichii (strain DSM 6014 / CCUG 31198 / JCM 15750 / NBRC 105917 / EY 4224 / RW1) (Sphingomonas wittichii).